Here is a 431-residue protein sequence, read N- to C-terminus: MVSLEKNDHLMLARQLPLKSVALILAGGRGTRLKDLTNKRAKPAVHFGGKFRIIDFALSNCINSGIRRMGVITQYQSHTLVQHIQRGWSFFNEEMNEFVDLLPAQQRMKGENWYRGTADAVTQNLDIIRRYKAEYVVILAGDHIYKQDYSRMLIDHVEKGARCTVACMPVPIEEASAFGVMAVDENDKIIEFVEKPANPPSMPNDPSKSLASMGIYVFDADYLYELLEEDDRDENSSHDFGKDLIPKITEAGLAYAHPFPLSCVQSDPDAEPYWRDVGTLEAYWKANLDLASVVPELDMYDRNWPIRTYNESLPPAKFVQDRSGSHGMTLNSLVSGGCVISGSVVVQSVLFSRVRVNSFCNIDSAVLLPEVWVGRSCRLRRCVIDRACVIPEGMVIGENAEEDARRFYRSEEGIVLVTREMLRKLGHKQER.

Lysine 39 is a beta-D-fructose 1,6-bisphosphate binding site. Positions 40, 46, and 52 each coordinate AMP. Tyrosine 114 contributes to the alpha-D-glucose 1-phosphate binding site. Arginine 130 provides a ligand contact to AMP. Alpha-D-glucose 1-phosphate contacts are provided by residues glycine 179, 194–195 (EK), and serine 212. AMP is bound by residues glutamate 370 and arginine 386. Residues 419-423 (REMLR) and 429-431 (QER) each bind beta-D-fructose 1,6-bisphosphate.

The protein belongs to the bacterial/plant glucose-1-phosphate adenylyltransferase family. As to quaternary structure, homotetramer.

It carries out the reaction alpha-D-glucose 1-phosphate + ATP + H(+) = ADP-alpha-D-glucose + diphosphate. The protein operates within glycan biosynthesis; glycogen biosynthesis. Its activity is regulated as follows. Allosterically activated by fructose-1,6-bisphosphate (F16BP) and inhibited by AMP. In terms of biological role, involved in the biosynthesis of ADP-glucose, a building block required for the elongation reactions to produce glycogen. Catalyzes the reaction between ATP and alpha-D-glucose 1-phosphate (G1P) to produce pyrophosphate and ADP-Glc. The protein is Glucose-1-phosphate adenylyltransferase of Shigella dysenteriae serotype 1 (strain Sd197).